The sequence spans 340 residues: Thioesterase pkgB (340 aa).

Residues His97, His99, Asp101, His102, and His205 each coordinate Zn(2+). Residue Asp101 is the Proton donor/acceptor of the active site. The segment covering 242 to 258 (SSRNGGSTSSIGSVSES) has biased composition (low complexity). The interval 242 to 271 (SSRNGGSTSSIGSVSESGDSDEEDNNMKTS) is disordered.

This sequence belongs to the metallo-beta-lactamase superfamily. Zn(2+) is required as a cofactor.

The catalysed reaction is 3,5,7,9,11,13-hexaoxotetradecanoyl-[ACP] = dehydrocitreoisocoumarin + holo-[ACP] + H2O. It carries out the reaction 3,5,7,9,11-pentaoxododecanoyl-[ACP] = 6,8-dihydroxy-3-(2-oxopropyl)-isocoumarin + holo-[ACP] + H2O. Functionally, thioesterase; part of the pkg gene cluster that mediates the biosynthesis of dihydrocitreoisocoumarin and 6,8-dihydroxy-3-(2-oxopropyl)-isocoumarin. The non-reducing polyketide synthase pkgA performs the condensation of one acetyl-CoA starter unit with 6 and 5 malonyl-CoA units, respectively. As pkgA lacks a releasing domain, the thioesterase pkgB is necessary to break the thioester bond and release dihydrocitreoisocoumarin and 6,8-dihydroxy-3-(2-oxopropyl)-isocoumarin from pkgA. The protein is Thioesterase pkgB of Emericella nidulans (strain FGSC A4 / ATCC 38163 / CBS 112.46 / NRRL 194 / M139) (Aspergillus nidulans).